The chain runs to 150 residues: Transcriptional regulator MraZ (150 aa).

2 consecutive SpoVT-AbrB domains span residues 6–52 (EFFN…PYQE) and 80–126 (AVEC…NRTK).

The protein belongs to the MraZ family. Forms oligomers.

The protein resides in the cytoplasm. Its subcellular location is the nucleoid. The polypeptide is Transcriptional regulator MraZ (Syntrophotalea carbinolica (strain DSM 2380 / NBRC 103641 / GraBd1) (Pelobacter carbinolicus)).